The sequence spans 948 residues: UvrABC system protein A (948 aa).

An ATP-binding site is contributed by 33–40; it reads GLSGSGKS. The C4-type zinc-finger motif lies at 252-279; that stretch reads CPICGFSIGELEPRMFSFNSPFGACPTC. 2 consecutive ABC transporter domains span residues 309 to 587 and 607 to 935; these read WIPT…KKSL and ASDR…KYLK. 639–646 is an ATP binding site; the sequence is GVSGSGKS. A C4-type zinc finger spans residues 738 to 764; it reads CEACKGDGIIKIEMHFLPDVYVPCEVC.

It belongs to the ABC transporter superfamily. UvrA family. In terms of assembly, forms a heterotetramer with UvrB during the search for lesions.

Its subcellular location is the cytoplasm. The UvrABC repair system catalyzes the recognition and processing of DNA lesions. UvrA is an ATPase and a DNA-binding protein. A damage recognition complex composed of 2 UvrA and 2 UvrB subunits scans DNA for abnormalities. When the presence of a lesion has been verified by UvrB, the UvrA molecules dissociate. This Staphylococcus aureus (strain MRSA252) protein is UvrABC system protein A.